The following is a 139-amino-acid chain: Small ribosomal subunit protein uS12 (139 aa).

The tract at residues 1-44 (MPTINQLVKKPRTSKVKKSTAPALNKGYNSHKKKATDLASPQKR) is disordered. Over residues 9-18 (KKPRTSKVKK) the composition is skewed to basic residues. Aspartate 102 carries the post-translational modification 3-methylthioaspartic acid.

It belongs to the universal ribosomal protein uS12 family. Part of the 30S ribosomal subunit. Contacts proteins S8 and S17. May interact with IF1 in the 30S initiation complex.

With S4 and S5 plays an important role in translational accuracy. Its function is as follows. Interacts with and stabilizes bases of the 16S rRNA that are involved in tRNA selection in the A site and with the mRNA backbone. Located at the interface of the 30S and 50S subunits, it traverses the body of the 30S subunit contacting proteins on the other side and probably holding the rRNA structure together. The combined cluster of proteins S8, S12 and S17 appears to hold together the shoulder and platform of the 30S subunit. The sequence is that of Small ribosomal subunit protein uS12 from Macrococcus caseolyticus (strain JCSC5402) (Macrococcoides caseolyticum).